The sequence spans 162 residues: Cytochrome B pre-mRNA-processing protein 6 (162 aa).

Ser2 carries the N-acetylserine modification. Thr97 is subject to Phosphothreonine.

It localises to the mitochondrion. Its function is as follows. This protein is involved in processing of the 5' terminus and the intervening sequences of cytochrome b pre-mRNA. This chain is Cytochrome B pre-mRNA-processing protein 6 (CBP6), found in Saccharomyces cerevisiae (strain ATCC 204508 / S288c) (Baker's yeast).